We begin with the raw amino-acid sequence, 158 residues long: Putative pre-16S rRNA nuclease (158 aa).

Belongs to the YqgF nuclease family.

It localises to the cytoplasm. Its function is as follows. Could be a nuclease involved in processing of the 5'-end of pre-16S rRNA. This is Putative pre-16S rRNA nuclease from Hahella chejuensis (strain KCTC 2396).